Reading from the N-terminus, the 717-residue chain is DNA ligase (717 aa).

NAD(+) contacts are provided by residues 44–48 (DADYD), 93–94 (SL), and Glu127. Lys129 serves as the catalytic N6-AMP-lysine intermediate. NAD(+) is bound by residues Arg150, Glu186, Lys302, and Lys326. Cys431, Cys434, Cys455, and Cys461 together coordinate Zn(2+). Residues 639 to 717 (ATDSPVAGKT…EDEWLALIGG (79 aa)) enclose the BRCT domain.

Belongs to the NAD-dependent DNA ligase family. LigA subfamily. Mg(2+) serves as cofactor. Mn(2+) is required as a cofactor.

It carries out the reaction NAD(+) + (deoxyribonucleotide)n-3'-hydroxyl + 5'-phospho-(deoxyribonucleotide)m = (deoxyribonucleotide)n+m + AMP + beta-nicotinamide D-nucleotide.. In terms of biological role, DNA ligase that catalyzes the formation of phosphodiester linkages between 5'-phosphoryl and 3'-hydroxyl groups in double-stranded DNA using NAD as a coenzyme and as the energy source for the reaction. It is essential for DNA replication and repair of damaged DNA. The sequence is that of DNA ligase from Sinorhizobium medicae (strain WSM419) (Ensifer medicae).